The following is a 230-amino-acid chain: MKQIIAMGGGGFSMEPDNLSLDQYILNQSKREQPRICFLPTASGDSQNYIQRFYHAFQTLDCVPSHLSLFKPPSSDLVSFVMEMDVIYVGGGNTRNLLVLWKEWGLDHILREAWKNGVVVAGISAGAICWFEEGVTDSAGPLTSLKSLGFLQGSFCPHYDGEKDRRPAYHQLISNKFLCSGYAADDGAALHFINDQLFQTVSSRSGAKAYRVMMAEHEIAEIPLPVKYLG.

Residues Ser-124 and His-158 each act as charge relay system in the active site.

It belongs to the peptidase S51 family.

This is an uncharacterized protein from Bacillus subtilis (strain 168).